The chain runs to 59 residues: Three-finger toxin MS1 (59 aa).

Cystine bridges form between Cys-3/Cys-22, Cys-17/Cys-39, Cys-41/Cys-52, and Cys-53/Cys-58.

This sequence belongs to the three-finger toxin family. Short-chain subfamily. Type I alpha-neurotoxin sub-subfamily. In terms of tissue distribution, expressed by the venom gland.

It localises to the secreted. In terms of biological role, produces peripheral paralysis by blocking neuromuscular transmission at the postsynaptic site. Binds to and inhibits the endogenous nicotinic acetylcholine receptors (nAChR) in human rhabdomyosarcoma TE 671 cell line with an IC(50) of 48.2 mM. This neurotoxin is lethal to mice by intraperitoneal injection and to zebrafish by injection at the back of the dorsolateral region. This Micrurus surinamensis (Surinam coral snake) protein is Three-finger toxin MS1.